We begin with the raw amino-acid sequence, 223 residues long: Endonuclease V (223 aa).

Residues Asp35 and Asp103 each coordinate Mg(2+).

Belongs to the endonuclease V family. Requires Mg(2+) as cofactor.

The protein resides in the cytoplasm. The enzyme catalyses Endonucleolytic cleavage at apurinic or apyrimidinic sites to products with a 5'-phosphate.. In terms of biological role, DNA repair enzyme involved in the repair of deaminated bases. Selectively cleaves double-stranded DNA at the second phosphodiester bond 3' to a deoxyinosine leaving behind the intact lesion on the nicked DNA. This is Endonuclease V from Shigella flexneri serotype 5b (strain 8401).